The chain runs to 126 residues: uncharacterized protein (126 aa).

Residues 1–27 form the signal peptide; the sequence is MKNLFIFLSLMMMFVLTACGGSKYDDA. Residues 93–126 form a disordered region; it reads MTDMPGNGENDRLGLSKKTPDYEEVKGEETELEE. Residues 101-126 are compositionally biased toward basic and acidic residues; sequence ENDRLGLSKKTPDYEEVKGEETELEE.

This is an uncharacterized protein from Bacillus subtilis (strain 168).